The sequence spans 130 residues: Small ribosomal subunit protein uS9 (130 aa).

Positions 105–130 are disordered; it reads TRDSRMVERKKPGLKKARRASQFSKR. Positions 106–115 are enriched in basic and acidic residues; that stretch reads RDSRMVERKK. The span at 116 to 130 shows a compositional bias: basic residues; the sequence is PGLKKARRASQFSKR.

It belongs to the universal ribosomal protein uS9 family.

This chain is Small ribosomal subunit protein uS9, found in Oenococcus oeni (strain ATCC BAA-331 / PSU-1).